The sequence spans 146 residues: Hemoglobin subunit beta-1 (146 aa).

In terms of domain architecture, Globin spans 2–146 (HWTAEEKQLI…VSHSLARRYH (145 aa)). Heme b is bound by residues His63 and His92.

The protein belongs to the globin family. As to quaternary structure, the major hemoglobin component (HbIII) is a tetramer of two alpha-2 chains and two beta-1 chains. In terms of tissue distribution, red blood cells.

Functionally, involved in oxygen transport from the lung to the various peripheral tissues. This is Hemoglobin subunit beta-1 (HBB1) from Varanus albigularis (White-throated monitor).